A 420-amino-acid chain; its full sequence is Fasciclin-like arabinogalactan protein 4 (420 aa).

Positions 1–28 (MANVISISHFTLLALPYLLLLLSSTAAA) are cleaved as a signal peptide. FAS1 domains are found at residues 29 to 177 (INVT…DSLI) and 205 to 351 (GINL…SKVL). 8 N-linked (GlcNAc...) asparagine glycosylation sites follow: Asn30, Asn40, Asn135, Asn154, Asn167, Asn207, Asn312, and Asn317. The tract at residues 360–388 (SGQPVATAPPQEISLSPESSSEQPSRLVS) is disordered. Positions 368–384 (PPQEISLSPESSSEQPS) are enriched in low complexity. Ser396 carries the GPI-anchor amidated serine lipid modification. The propeptide at 397-420 (GAVKRPLGFLVLWCWCIAFCYVLV) is removed in mature form.

Belongs to the fasciclin-like AGP family. Expressed in all plant organs and tissues, including guard cells in the leaf.

The protein localises to the cell membrane. Functionally, may be a cell surface adhesion protein that is required for normal cell expansion. The polypeptide is Fasciclin-like arabinogalactan protein 4 (FLA4) (Arabidopsis thaliana (Mouse-ear cress)).